The chain runs to 392 residues: ER-bound oxygenase mpaB (392 aa).

Residues 1 to 21 (MSLPLPPALSELARALPYSRT) lie on the Lumenal side of the membrane. The chain crosses the membrane as a helical span at residues 22 to 41 (QWLPIFVGFLIGYPILIRAL). Topologically, residues 42-392 (RYKRHGEMKK…WSKYHATTND (351 aa)) are cytoplasmic. The tract at residues 352-376 (DLGQKKGPQGDPGNDEGIKDLKDGE) is disordered. The segment covering 367 to 376 (EGIKDLKDGE) has biased composition (basic and acidic residues).

This sequence belongs to the mpaB oxygenase family.

The protein resides in the endoplasmic reticulum membrane. The enzyme catalyses 4-farnesyl-3,5-dihydroxy-6-methylphthalide + AH2 + 2 O2 = (4E,8E)-10-(4,6-dihydroxy-7-methyl-3-oxo-1,3-dihydro-2-benzofuran-5-yl)-4,8-dimethyldeca-4,8-dienoate + acetone + A + H2O + H(+). It participates in secondary metabolite biosynthesis; terpenoid biosynthesis. In terms of biological role, ER-bound oxygenase; part of the gene cluster that mediates the biosynthesis of mycophenolic acid (MPA), the first isolated antibiotic natural product in the world obtained from a culture of Penicillium brevicompactum in 1893. MpaB catalyzes the oxidative cleavage the C19-C20 double bond in farnesyl-DHMP (FDHMP) to yield FDHMP-3C via a mycophenolic aldehyde intermediate. The first step of the pathway is the synthesis of 5-methylorsellinic acid (5MOA) by the cytosolic polyketide synthase mpaC. 5MOA is then converted to the phthalide compound 5,7-dihydroxy-4,6-dimethylphthalide (DHMP) by the endoplasmic reticulum-bound cytochrome P450 monooxygenase mpaDE. MpaDE first catalyzes hydroxylation of 5-MOA to 4,6-dihydroxy-2-(hydroxymethyl)-3-methylbenzoic acid (DHMB). MpaDE then acts as a lactone synthase that catalyzes the ring closure to convert DHMB into DHMP. The next step is the prenylation of DHMP by the Golgi apparatus-associated prenyltransferase mpaA to yield farnesyl-DHMP (FDHMP). The ER-bound oxygenase mpaB then mediates the oxidative cleavage the C19-C20 double bond in FDHMP to yield FDHMP-3C via a mycophenolic aldehyde intermediate. The O-methyltransferase mpaG catalyzes the methylation of FDHMP-3C to yield MFDHMP-3C. After the cytosolic methylation of FDHMP-3C, MFDHMP-3C enters into peroxisomes probably via free diffusion due to its low molecular weight. Upon a peroxisomal CoA ligation reaction, catalyzed by a beta-oxidation component enzyme acyl-CoA ligase ACL891, MFDHMP-3C-CoA would then be restricted to peroxisomes for the following beta-oxidation pathway steps. The peroxisomal beta-oxidation machinery than converts MFDHMP-3C-CoA into MPA_CoA, via a beta-oxidation chain-shortening process. Finally mpaH acts as a peroxisomal acyl-CoA hydrolase with high substrate specificity toward MPA-CoA to release the final product MPA. This chain is ER-bound oxygenase mpaB, found in Penicillium brevicompactum.